A 394-amino-acid chain; its full sequence is Cystathionine gamma-lyase (394 aa).

The tract at residues 37–56 (KQSSPANPIGTYEYSRSQNP) is disordered. Substrate is bound by residues Arg-52, Tyr-104, and Arg-109. An N6-(pyridoxal phosphate)lysine modification is found at Lys-204. Glu-334 lines the substrate pocket. Phosphoserine is present on Ser-362.

It belongs to the trans-sulfuration enzymes family. In terms of assembly, homotetramer. Pyridoxal 5'-phosphate is required as a cofactor.

It is found in the cytoplasm. It carries out the reaction L,L-cystathionine + H2O = 2-oxobutanoate + L-cysteine + NH4(+). Its pathway is amino-acid biosynthesis; L-cysteine biosynthesis; L-cysteine from L-homocysteine and L-serine: step 2/2. In terms of biological role, catalyzes the production of cysteine from cystathionine in the reverse transsulfuration pathway for the biosynthesis of sulfur-containing amino acids cysteine and methionine. In this pathway, homocysteine sulfur is converted to cysteine sulfur. Also has cystathionine beta-lyase and cystathionine gamma-synthase activities in vitro. Cystathionine beta-lyase may be physiological, while cystathionine gamma-synthase activity is not, as the required substrate O-succinyl-L-homoserine(OSH) does not occur naturally in S.cerevisiae. The polypeptide is Cystathionine gamma-lyase (Saccharomyces cerevisiae (strain ATCC 204508 / S288c) (Baker's yeast)).